Here is a 284-residue protein sequence, read N- to C-terminus: MTAHLIDGKAIAANLRKQIAQRVEERRQQGLRTPGLAVILVGTDPASQVYVSHKRKDCEEVGFISQAFDLPSETTQQALTELIDRLNDDPAVDGILLQLPLPAHLDASLLLERIRPDKDVDGFHPYNIGRLAQRIPLLRPCTPKGIMTLLESTGQDLYGMNAVIVGASNIVGRPMAMELLLAGCTVTVCHRFTKDLAGHVGRADLVVVAAGKPGLVKGEWVKEGAIVIDVGINRQEDGKLVGDVVYETALPRAGWITPVPGGVGPMTRACLLENTLYAAEELHK.

NADP(+) contacts are provided by residues Gly166 to Ser168 and Ile232.

Belongs to the tetrahydrofolate dehydrogenase/cyclohydrolase family. As to quaternary structure, homodimer.

It catalyses the reaction (6R)-5,10-methylene-5,6,7,8-tetrahydrofolate + NADP(+) = (6R)-5,10-methenyltetrahydrofolate + NADPH. It carries out the reaction (6R)-5,10-methenyltetrahydrofolate + H2O = (6R)-10-formyltetrahydrofolate + H(+). Its pathway is one-carbon metabolism; tetrahydrofolate interconversion. Functionally, catalyzes the oxidation of 5,10-methylenetetrahydrofolate to 5,10-methenyltetrahydrofolate and then the hydrolysis of 5,10-methenyltetrahydrofolate to 10-formyltetrahydrofolate. The protein is Bifunctional protein FolD of Pseudomonas putida (strain W619).